We begin with the raw amino-acid sequence, 600 residues long: UvrABC system protein C (600 aa).

In terms of domain architecture, GIY-YIG spans 15 to 100; that stretch reads NSAGVYQYFN…IKQLHPKYNI (86 aa). Positions 203–238 constitute a UVR domain; sequence SILIKNLEKQMLVLAQNENYEEAAKVRDQIVTIKDL.

The protein belongs to the UvrC family. Interacts with UvrB in an incision complex.

It localises to the cytoplasm. Functionally, the UvrABC repair system catalyzes the recognition and processing of DNA lesions. UvrC both incises the 5' and 3' sides of the lesion. The N-terminal half is responsible for the 3' incision and the C-terminal half is responsible for the 5' incision. The chain is UvrABC system protein C from Campylobacter jejuni subsp. jejuni serotype O:6 (strain 81116 / NCTC 11828).